The chain runs to 146 residues: Large ribosomal subunit protein uL15 (146 aa).

Positions 1 to 13 (MKLHELRPAEGSK) are enriched in basic and acidic residues. Residues 1-54 (MKLHELRPAEGSKKAPKRVGRGNGSGLGKTAGKGHKGQNARSGGGVRPGFEGGQ) are disordered. Gly residues-rich tracts occupy residues 21 to 31 (RGNGSGLGKTA) and 42 to 52 (SGGGVRPGFEG).

The protein belongs to the universal ribosomal protein uL15 family. Part of the 50S ribosomal subunit.

Binds to the 23S rRNA. In Clostridium novyi (strain NT), this protein is Large ribosomal subunit protein uL15.